We begin with the raw amino-acid sequence, 299 residues long: tRNA dimethylallyltransferase (299 aa).

13-20 (GPTASGKT) contributes to the ATP binding site. 15 to 20 (TASGKT) lines the substrate pocket. Positions 38-41 (DSRQ) are interaction with substrate tRNA.

The protein belongs to the IPP transferase family. Monomer. Requires Mg(2+) as cofactor.

It catalyses the reaction adenosine(37) in tRNA + dimethylallyl diphosphate = N(6)-dimethylallyladenosine(37) in tRNA + diphosphate. Functionally, catalyzes the transfer of a dimethylallyl group onto the adenine at position 37 in tRNAs that read codons beginning with uridine, leading to the formation of N6-(dimethylallyl)adenosine (i(6)A). The polypeptide is tRNA dimethylallyltransferase (Prochlorococcus marinus subsp. pastoris (strain CCMP1986 / NIES-2087 / MED4)).